Consider the following 428-residue polypeptide: Adenylosuccinate synthetase (428 aa).

Residues 12–18 and 40–42 contribute to the GTP site; these read GDEGKGK and GHT. Catalysis depends on D13, which acts as the Proton acceptor. 2 residues coordinate Mg(2+): D13 and G40. Residues 13 to 16, 38 to 41, T128, R142, Q222, T237, and R301 contribute to the IMP site; these read DEGK and NAGH. H41 (proton donor) is an active-site residue. 297–303 is a binding site for substrate; the sequence is VNTGRAR. GTP is bound by residues R303, 329–331, and 411–413; these read KLD and STS.

This sequence belongs to the adenylosuccinate synthetase family. As to quaternary structure, homodimer. It depends on Mg(2+) as a cofactor.

It is found in the cytoplasm. The enzyme catalyses IMP + L-aspartate + GTP = N(6)-(1,2-dicarboxyethyl)-AMP + GDP + phosphate + 2 H(+). It functions in the pathway purine metabolism; AMP biosynthesis via de novo pathway; AMP from IMP: step 1/2. In terms of biological role, plays an important role in the de novo pathway of purine nucleotide biosynthesis. Catalyzes the first committed step in the biosynthesis of AMP from IMP. The protein is Adenylosuccinate synthetase of Caulobacter vibrioides (strain ATCC 19089 / CIP 103742 / CB 15) (Caulobacter crescentus).